The sequence spans 337 residues: Protein EXORDIUM-like 3 (337 aa).

Positions 1–25 (MHSLPVNLVLTVLTVFLTSPAQVIG) are cleaved as a signal peptide. Asparagine 34, asparagine 66, and asparagine 119 each carry an N-linked (GlcNAc...) asparagine glycan.

The protein belongs to the EXORDIUM family.

Its subcellular location is the secreted. It is found in the extracellular space. It localises to the apoplast. May play a role in a brassinosteroid-dependent regulation of growth and development. This chain is Protein EXORDIUM-like 3 (EXL3), found in Arabidopsis thaliana (Mouse-ear cress).